A 353-amino-acid polypeptide reads, in one-letter code: tRNA-specific 2-thiouridylase MnmA 2 (353 aa).

Residue 6–13 (LLSGGVDS) participates in ATP binding. The segment at 92-94 (NPD) is interaction with target base in tRNA. Cys-97 (nucleophile) is an active-site residue. Residues Cys-97 and Cys-192 are joined by a disulfide bond. Gly-120 serves as a coordination point for ATP. An interaction with tRNA region spans residues 142–144 (KDQ). Cys-192 functions as the Cysteine persulfide intermediate in the catalytic mechanism.

Belongs to the MnmA/TRMU family.

The protein resides in the cytoplasm. It catalyses the reaction S-sulfanyl-L-cysteinyl-[protein] + uridine(34) in tRNA + AH2 + ATP = 2-thiouridine(34) in tRNA + L-cysteinyl-[protein] + A + AMP + diphosphate + H(+). Its function is as follows. Catalyzes the 2-thiolation of uridine at the wobble position (U34) of tRNA, leading to the formation of s(2)U34. The protein is tRNA-specific 2-thiouridylase MnmA 2 of Bacteroides fragilis (strain ATCC 25285 / DSM 2151 / CCUG 4856 / JCM 11019 / LMG 10263 / NCTC 9343 / Onslow / VPI 2553 / EN-2).